The following is a 404-amino-acid chain: Tryptophan synthase beta chain (404 aa).

Residue K98 is modified to N6-(pyridoxal phosphate)lysine.

The protein belongs to the TrpB family. In terms of assembly, tetramer of two alpha and two beta chains. Requires pyridoxal 5'-phosphate as cofactor.

It catalyses the reaction (1S,2R)-1-C-(indol-3-yl)glycerol 3-phosphate + L-serine = D-glyceraldehyde 3-phosphate + L-tryptophan + H2O. Its pathway is amino-acid biosynthesis; L-tryptophan biosynthesis; L-tryptophan from chorismate: step 5/5. Its function is as follows. The beta subunit is responsible for the synthesis of L-tryptophan from indole and L-serine. The sequence is that of Tryptophan synthase beta chain from Acidiphilium cryptum (strain JF-5).